The sequence spans 310 residues: Mitochondrial citrate transporter F (310 aa).

3 Solcar repeats span residues 23–108 (KKVH…LKNH), 115–207 (PPGL…FKRL), and 216–303 (DNMG…HKKL). 6 helical membrane passes run 29–49 (FWFG…LDLV), 85–105 (SAAI…YEEL), 122–142 (IGMA…ADVL), 186–206 (NSTR…TFKR), 222–242 (FTAS…VDVI), and 275–296 (AFRG…TFIF).

The protein belongs to the mitochondrial carrier (TC 2.A.29) family.

It localises to the mitochondrion inner membrane. Its function is as follows. Mitochondrial transporter that does not mediate citrate export from mitochondria to cytoplasm. Its exact function has still to be determined. This chain is Mitochondrial citrate transporter F, found in Aspergillus niger (strain ATCC 1015 / CBS 113.46 / FGSC A1144 / LSHB Ac4 / NCTC 3858a / NRRL 328 / USDA 3528.7).